The following is a 93-amino-acid chain: Integration host factor subunit beta (93 aa).

This sequence belongs to the bacterial histone-like protein family. In terms of assembly, heterodimer of an alpha and a beta chain.

Its function is as follows. This protein is one of the two subunits of integration host factor, a specific DNA-binding protein that functions in genetic recombination as well as in transcriptional and translational control. In Actinobacillus pleuropneumoniae serotype 7 (strain AP76), this protein is Integration host factor subunit beta.